The sequence spans 323 residues: MAALIAENFRFLSLFFKSKDVMIFNGLVALGTVGSQELFTVVAFHCPCSPARNYLYGLAAIGVPALALFLIGVILNNHTWNLVAECQYRRTKNCSAAPNFLLLSSIVGRAAVAPVTWSVISLLRGEAYVCALSEFVNPHSLMVGERSFPVAHATEILARFPCGEGPANLSVFREEVSRRLKYESQLFGWLLIGVVAILVFLTKCLKHYCSPLSYRQEAYWAQYRANEDQLFQRTAEVHSRVLAANNVRRFFGFVALDKDDEELVAKFPVEGTQPRLQWNAITGVYLYRENQGLPLYSRLHKWAQGVVGNGMTPDHVEMSLLPS.

The Cytoplasmic portion of the chain corresponds to 1–21; that stretch reads MAALIAENFRFLSLFFKSKDV. Residues 14 to 39 form a central pore region; it reads LFFKSKDVMIFNGLVALGTVGSQELF. Residues 22–43 traverse the membrane as a helical segment; the sequence is MIFNGLVALGTVGSQELFTVVA. Over 44 to 52 the chain is Extracellular; that stretch reads FHCPCSPAR. Intrachain disulfides connect Cys-46–Cys-130 and Cys-48–Cys-162. Residues 53–76 form a helical membrane-spanning segment; the sequence is NYLYGLAAIGVPALALFLIGVILN. The Cytoplasmic segment spans residues 77 to 101; the sequence is NHTWNLVAECQYRRTKNCSAAPNFL. Residues 102 to 132 traverse the membrane as a helical segment; that stretch reads LLSSIVGRAAVAPVTWSVISLLRGEAYVCAL. Residues 133-179 are Extracellular-facing; the sequence is SEFVNPHSLMVGERSFPVAHATEILARFPCGEGPANLSVFREEVSRR. Positions 145–152 are hemichannel docking; sequence ERSFPVAH. The chain crosses the membrane as a helical span at residues 180–206; it reads LKYESQLFGWLLIGVVAILVFLTKCLK. Over 207-323 the chain is Cytoplasmic; the sequence is HYCSPLSYRQ…DHVEMSLLPS (117 aa). The segment at 214–251 is intersubunit interaction; sequence YRQEAYWAQYRANEDQLFQRTAEVHSRVLAANNVRRFF.

This sequence belongs to the CALHM family. In terms of assembly, homo-undecamer. Two undecameric hemichannels can assemble in a head-to-head manner to form a gap junction.

It is found in the cell membrane. The enzyme catalyses ATP(in) = ATP(out). Pore-forming subunit of Ca(2+) homeostasis modulator channels. Mediates ATP release from astrocytes and ATP-induced Ca(2+) influx in microglia thus regulating neuronal ATP and Ca(2+) homeostasis, synaptic transmission and neuroinflammatory response. May form intercellular gap junctions. The gating mechanism remains unknown. The protein is Calcium homeostasis modulator protein 2 (CALHM2) of Bos taurus (Bovine).